Here is a 311-residue protein sequence, read N- to C-terminus: Aspartate carbamoyltransferase catalytic subunit (311 aa).

Carbamoyl phosphate contacts are provided by R55 and T56. Position 85 (K85) interacts with L-aspartate. Carbamoyl phosphate contacts are provided by R106, H135, and Q138. 2 residues coordinate L-aspartate: R168 and R230. Positions 268 and 269 each coordinate carbamoyl phosphate.

Belongs to the aspartate/ornithine carbamoyltransferase superfamily. ATCase family. Heterododecamer (2C3:3R2) of six catalytic PyrB chains organized as two trimers (C3), and six regulatory PyrI chains organized as three dimers (R2).

It catalyses the reaction carbamoyl phosphate + L-aspartate = N-carbamoyl-L-aspartate + phosphate + H(+). The protein operates within pyrimidine metabolism; UMP biosynthesis via de novo pathway; (S)-dihydroorotate from bicarbonate: step 2/3. Functionally, catalyzes the condensation of carbamoyl phosphate and aspartate to form carbamoyl aspartate and inorganic phosphate, the committed step in the de novo pyrimidine nucleotide biosynthesis pathway. This chain is Aspartate carbamoyltransferase catalytic subunit, found in Yersinia pseudotuberculosis serotype O:1b (strain IP 31758).